The following is a 188-amino-acid chain: dCTP deaminase (188 aa).

DCTP contacts are provided by residues 111 to 116 (KSTYAR), 135 to 137 (TLE), Gln156, Tyr170, and Gln180. Glu137 (proton donor/acceptor) is an active-site residue.

The protein belongs to the dCTP deaminase family. In terms of assembly, homotrimer.

It carries out the reaction dCTP + H2O + H(+) = dUTP + NH4(+). It participates in pyrimidine metabolism; dUMP biosynthesis; dUMP from dCTP (dUTP route): step 1/2. In terms of biological role, catalyzes the deamination of dCTP to dUTP. This Cupriavidus metallidurans (strain ATCC 43123 / DSM 2839 / NBRC 102507 / CH34) (Ralstonia metallidurans) protein is dCTP deaminase.